The following is a 120-amino-acid chain: UPF0102 protein PST_1070 (120 aa).

Belongs to the UPF0102 family.

The chain is UPF0102 protein PST_1070 from Stutzerimonas stutzeri (strain A1501) (Pseudomonas stutzeri).